A 239-amino-acid chain; its full sequence is Proteasome activator complex subunit 2 (239 aa).

Alanine 2 is subject to N-acetylalanine. The residue at position 10 (serine 10) is a Phosphoserine. The segment at 65 to 86 (DIPIPDPPPKDDEMETDKQEKK) is disordered. The span at 72 to 86 (PPKDDEMETDKQEKK) shows a compositional bias: basic and acidic residues.

This sequence belongs to the PA28 family. As to quaternary structure, heterodimer of PSME1 and PSME2, which forms a hexameric ring.

Implicated in immunoproteasome assembly and required for efficient antigen processing. The PA28 activator complex enhances the generation of class I binding peptides by altering the cleavage pattern of the proteasome. The chain is Proteasome activator complex subunit 2 (PSME2) from Bos taurus (Bovine).